Consider the following 156-residue polypeptide: Myosin regulatory light chain, striated adductor muscle (156 aa).

The residue at position 1 (alanine 1) is a Blocked amino end (Ala). 2 consecutive EF-hand domains span residues 15 to 50 (KQIQEMKEAFSMIDVDRDGFVNKDDLKAISEQLGRT) and 84 to 119 (DTEETLRNAFAMFDELDTKKLNIEYIKDLLENMGDN). Residues aspartate 28, aspartate 30, aspartate 32, and aspartate 39 each contribute to the Ca(2+) site.

Functionally, in molluscan muscle, calcium regulation is associated with myosin rather than with actin. Muscle myosin contains two types of light chains: the catalytic light chain, essential for ATPase activity, and the regulatory light chain, a calcium-binding protein responsible for Ca(2+) dependent binding and Ca(2+) dependent Mg-ATPase activity. This Mizuhopecten yessoensis (Japanese scallop) protein is Myosin regulatory light chain, striated adductor muscle.